A 962-amino-acid chain; its full sequence is DNA primase (962 aa).

Residues 894–932 form a CHC2-type zinc finger; it reads CLRARHARSPPARTFVALSVDAHDRLCISLSQQCFATKC.

The protein belongs to the herpesviridae DNA primase family. As to quaternary structure, associates with the helicase and the primase-associated factor to form the helicase-primase factor.

Its subcellular location is the host nucleus. Essential component of the helicase/primase complex. Unwinds the DNA at the replication forks and generates single-stranded DNA for both leading and lagging strand synthesis. The primase initiates primer synthesis and thereby produces large amount of short RNA primers on the lagging strand that the polymerase elongates using dNTPs. The polypeptide is DNA primase (UL52) (Sus scrofa (Pig)).